The following is a 121-amino-acid chain: Phosphoribosyl-ATP pyrophosphatase (121 aa).

This sequence belongs to the PRA-PH family.

Its subcellular location is the cytoplasm. The enzyme catalyses 1-(5-phospho-beta-D-ribosyl)-ATP + H2O = 1-(5-phospho-beta-D-ribosyl)-5'-AMP + diphosphate + H(+). It participates in amino-acid biosynthesis; L-histidine biosynthesis; L-histidine from 5-phospho-alpha-D-ribose 1-diphosphate: step 2/9. In Burkholderia cenocepacia (strain HI2424), this protein is Phosphoribosyl-ATP pyrophosphatase.